A 946-amino-acid chain; its full sequence is Bifunctional glutamine synthetase adenylyltransferase/adenylyl-removing enzyme (946 aa).

An adenylyl removase region spans residues Met1–Glu440. The adenylyl transferase stretch occupies residues Ser449–Glu946.

This sequence belongs to the GlnE family. The cofactor is Mg(2+).

The enzyme catalyses [glutamine synthetase]-O(4)-(5'-adenylyl)-L-tyrosine + phosphate = [glutamine synthetase]-L-tyrosine + ADP. It carries out the reaction [glutamine synthetase]-L-tyrosine + ATP = [glutamine synthetase]-O(4)-(5'-adenylyl)-L-tyrosine + diphosphate. Its function is as follows. Involved in the regulation of glutamine synthetase GlnA, a key enzyme in the process to assimilate ammonia. When cellular nitrogen levels are high, the C-terminal adenylyl transferase (AT) inactivates GlnA by covalent transfer of an adenylyl group from ATP to specific tyrosine residue of GlnA, thus reducing its activity. Conversely, when nitrogen levels are low, the N-terminal adenylyl removase (AR) activates GlnA by removing the adenylyl group by phosphorolysis, increasing its activity. The regulatory region of GlnE binds the signal transduction protein PII (GlnB) which indicates the nitrogen status of the cell. The protein is Bifunctional glutamine synthetase adenylyltransferase/adenylyl-removing enzyme of Escherichia coli (strain SE11).